We begin with the raw amino-acid sequence, 76 residues long: Protein TraJ (76 aa).

The protein resides in the cytoplasm. This protein is essential for positively regulating the expression of transfer genes that are involved in the conjugal transfer of DNA between bacterial cells. The polypeptide is Protein TraJ (traJ) (Escherichia coli).